The primary structure comprises 184 residues: Photosystem I assembly protein Ycf4 (184 aa).

2 helical membrane passes run 22-42 and 57-77; these read FCWA…GTSS and ILFF…LFIS.

This sequence belongs to the Ycf4 family.

It localises to the plastid. Its subcellular location is the chloroplast thylakoid membrane. Its function is as follows. Seems to be required for the assembly of the photosystem I complex. This is Photosystem I assembly protein Ycf4 from Panax ginseng (Korean ginseng).